Consider the following 257-residue polypeptide: Methylthioribulose-1-phosphate dehydratase (257 aa).

Cysteine 107 contributes to the substrate binding site. Histidine 125 and histidine 127 together coordinate Zn(2+). Catalysis depends on glutamate 148, which acts as the Proton donor/acceptor. Residue histidine 210 coordinates Zn(2+).

The protein belongs to the aldolase class II family. MtnB subfamily. Requires Zn(2+) as cofactor.

It localises to the cytoplasm. The enzyme catalyses 5-(methylsulfanyl)-D-ribulose 1-phosphate = 5-methylsulfanyl-2,3-dioxopentyl phosphate + H2O. It participates in amino-acid biosynthesis; L-methionine biosynthesis via salvage pathway; L-methionine from S-methyl-5-thio-alpha-D-ribose 1-phosphate: step 2/6. Functionally, catalyzes the dehydration of methylthioribulose-1-phosphate (MTRu-1-P) into 2,3-diketo-5-methylthiopentyl-1-phosphate (DK-MTP-1-P). This is Methylthioribulose-1-phosphate dehydratase from Lachancea thermotolerans (strain ATCC 56472 / CBS 6340 / NRRL Y-8284) (Yeast).